A 367-amino-acid chain; its full sequence is UDP-N-acetylglucosamine--N-acetylmuramyl-(pentapeptide) pyrophosphoryl-undecaprenol N-acetylglucosamine transferase (367 aa).

UDP-N-acetyl-alpha-D-glucosamine contacts are provided by residues 15–17 (TGG), Asn127, Arg163, Ser191, Ile249, and Gln294.

This sequence belongs to the glycosyltransferase 28 family. MurG subfamily.

The protein localises to the cell inner membrane. It carries out the reaction di-trans,octa-cis-undecaprenyl diphospho-N-acetyl-alpha-D-muramoyl-L-alanyl-D-glutamyl-meso-2,6-diaminopimeloyl-D-alanyl-D-alanine + UDP-N-acetyl-alpha-D-glucosamine = di-trans,octa-cis-undecaprenyl diphospho-[N-acetyl-alpha-D-glucosaminyl-(1-&gt;4)]-N-acetyl-alpha-D-muramoyl-L-alanyl-D-glutamyl-meso-2,6-diaminopimeloyl-D-alanyl-D-alanine + UDP + H(+). Its pathway is cell wall biogenesis; peptidoglycan biosynthesis. In terms of biological role, cell wall formation. Catalyzes the transfer of a GlcNAc subunit on undecaprenyl-pyrophosphoryl-MurNAc-pentapeptide (lipid intermediate I) to form undecaprenyl-pyrophosphoryl-MurNAc-(pentapeptide)GlcNAc (lipid intermediate II). The polypeptide is UDP-N-acetylglucosamine--N-acetylmuramyl-(pentapeptide) pyrophosphoryl-undecaprenol N-acetylglucosamine transferase (Burkholderia cenocepacia (strain ATCC BAA-245 / DSM 16553 / LMG 16656 / NCTC 13227 / J2315 / CF5610) (Burkholderia cepacia (strain J2315))).